A 221-amino-acid polypeptide reads, in one-letter code: MIKAILTDIEGTTSSINYVKDVMFGYSKKRLKDYLQTHWEEEHVKNIVKSLSQKLEKNIDLQTAVLVFKDFIEKDIKDTLLKELQGHIWEEGFKSGELKGHIYEDAYIKLKELKEKGYKIFAYSSGSIKAQKLFFGYSVYGDITNFFDGFFDTTMGSKKDKNSYIKIASATEIDPQMFLFLSDVKEEINASKEAGMNAILVSRDRPCEEKDCIRDFTEINL.

Belongs to the HAD-like hydrolase superfamily. MasA/MtnC family. As to quaternary structure, monomer. Requires Mg(2+) as cofactor.

The catalysed reaction is 5-methylsulfanyl-2,3-dioxopentyl phosphate + H2O = 1,2-dihydroxy-5-(methylsulfanyl)pent-1-en-3-one + phosphate. It functions in the pathway amino-acid biosynthesis; L-methionine biosynthesis via salvage pathway; L-methionine from S-methyl-5-thio-alpha-D-ribose 1-phosphate: step 3/6. The protein operates within amino-acid biosynthesis; L-methionine biosynthesis via salvage pathway; L-methionine from S-methyl-5-thio-alpha-D-ribose 1-phosphate: step 4/6. In terms of biological role, bifunctional enzyme that catalyzes the enolization of 2,3-diketo-5-methylthiopentyl-1-phosphate (DK-MTP-1-P) into the intermediate 2-hydroxy-3-keto-5-methylthiopentenyl-1-phosphate (HK-MTPenyl-1-P), which is then dephosphorylated to form the acireductone 1,2-dihydroxy-3-keto-5-methylthiopentene (DHK-MTPene). This Hydrogenobaculum sp. (strain Y04AAS1) protein is Enolase-phosphatase E1.